A 335-amino-acid polypeptide reads, in one-letter code: Tetraacyldisaccharide 4'-kinase (335 aa).

59-66 (TAGGNGKT) is an ATP binding site.

Belongs to the LpxK family.

It carries out the reaction a lipid A disaccharide + ATP = a lipid IVA + ADP + H(+). It functions in the pathway glycolipid biosynthesis; lipid IV(A) biosynthesis; lipid IV(A) from (3R)-3-hydroxytetradecanoyl-[acyl-carrier-protein] and UDP-N-acetyl-alpha-D-glucosamine: step 6/6. Functionally, transfers the gamma-phosphate of ATP to the 4'-position of a tetraacyldisaccharide 1-phosphate intermediate (termed DS-1-P) to form tetraacyldisaccharide 1,4'-bis-phosphate (lipid IVA). The chain is Tetraacyldisaccharide 4'-kinase from Vibrio campbellii (strain ATCC BAA-1116).